Reading from the N-terminus, the 134-residue chain is MLKEFKEFALRGNLIDLAIGFIIGAAFSGLVQSVVNDIIMPIVGRITGGVDFSNLYWQLSGAPQPTLALARQAGATIAYGNFITLLINFLIVAFVLFLAVKALNKVTPKPDPASTQPPKQEVLLEQIRDLLARK.

The next 2 helical transmembrane spans lie at 15-35 (IDLAIGFIIGAAFSGLVQSVV) and 80-100 (GNFITLLINFLIVAFVLFLAV).

This sequence belongs to the MscL family. Homopentamer.

Its subcellular location is the cell inner membrane. Its function is as follows. Channel that opens in response to stretch forces in the membrane lipid bilayer. May participate in the regulation of osmotic pressure changes within the cell. This chain is Large-conductance mechanosensitive channel, found in Methylocella silvestris (strain DSM 15510 / CIP 108128 / LMG 27833 / NCIMB 13906 / BL2).